Reading from the N-terminus, the 828-residue chain is Calpain-A (828 aa).

The region spanning 1 to 14 (MDDLRGFLRQAGQE) is the EF-hand 1 domain. A Calpain catalytic domain is found at 88 to 387 (LFEDPLFPAS…FDRVEICNLS (300 aa)). Catalysis depends on residues Cys143, His299, and Asn327. The segment at 388–557 (PDSLTEDQQN…TQNNMEENDD (170 aa)) is domain III. The tract at residues 558 to 577 (HVGYGGKADTITPGFPTPKP) is linker. The domain IV stretch occupies residues 578 to 828 (IDPQKEGLRR…EEWIERTIYS (251 aa)). 4 consecutive EF-hand domains span residues 579 to 614 (DPQK…SMRD), 699 to 734 (FSKD…IAKW), 729 to 764 (SEIA…AGYH), and 764 to 799 (HLNN…IKTY). Positions 712, 714, 716, 718, 723, 742, 746, 748, and 753 each coordinate Ca(2+).

This sequence belongs to the peptidase C2 family. In terms of processing, undergoes calcium-dependent autolytic cleavage between Lys-54 and Asn-55, which is necessary for activation of the protein. In terms of tissue distribution, localized to the anterior and posterior embryonic poles just after fertilization. Becomes distributed around the polar buds and just below the pole cells of the posterior pole during cleavage cycles. During these nuclear divisions anterior localization disappears. Localized to actin caps that underlie the plasma membrane, immediately above each nucleus at cleavage cycles 8 and 9. Localized to a small set of nerve, midgut and blood cells in adults.

Its subcellular location is the cytoplasm. With respect to regulation, activated by millimolar concentrations of calcium, and by phosphatidylinositol 4,5-diphosphate, phosphatidylinositol 4-monophosphate, phosphatidylinositol and phosphatidic acid. In terms of biological role, calcium-regulated non-lysosomal thiol-protease. Involved in the organization of the actin-related cytoskeleton during embryogenesis. This chain is Calpain-A (CalpA), found in Drosophila melanogaster (Fruit fly).